A 141-amino-acid chain; its full sequence is Nucleoside diphosphate kinase (141 aa).

ATP contacts are provided by K11, F59, R87, T93, R104, and N114. The Pros-phosphohistidine intermediate role is filled by H117.

Belongs to the NDK family. As to quaternary structure, homotetramer. Mg(2+) serves as cofactor.

It is found in the cytoplasm. The catalysed reaction is a 2'-deoxyribonucleoside 5'-diphosphate + ATP = a 2'-deoxyribonucleoside 5'-triphosphate + ADP. It catalyses the reaction a ribonucleoside 5'-diphosphate + ATP = a ribonucleoside 5'-triphosphate + ADP. Its function is as follows. Major role in the synthesis of nucleoside triphosphates other than ATP. The ATP gamma phosphate is transferred to the NDP beta phosphate via a ping-pong mechanism, using a phosphorylated active-site intermediate. This Paraburkholderia xenovorans (strain LB400) protein is Nucleoside diphosphate kinase.